The following is a 247-amino-acid chain: ATP synthase subunit a 1 (247 aa).

The next 6 helical transmembrane spans lie at 32 to 52 (YMLLAVVLIAGMMLAAGRALV), 82 to 102 (FFPLVFSLFMFIFVSNIVGII), 112 to 132 (IIVTFSLALLVFLTVIIYGFY), 141 to 161 (LFVPSGIPAVILPLVVVIEII), 181 to 201 (GHVTLKVFASFVTMLGALGFV), and 206 to 226 (ALLPLGLTVALTGLELMVAFL).

It belongs to the ATPase A chain family. As to quaternary structure, F-type ATPases have 2 components, CF(1) - the catalytic core - and CF(0) - the membrane proton channel. CF(1) has five subunits: alpha(3), beta(3), gamma(1), delta(1), epsilon(1). CF(0) has four main subunits: a, b, b' and c.

The protein localises to the cell inner membrane. Its function is as follows. Key component of the proton channel; it plays a direct role in the translocation of protons across the membrane. This Bradyrhizobium sp. (strain BTAi1 / ATCC BAA-1182) protein is ATP synthase subunit a 1.